Here is a 426-residue protein sequence, read N- to C-terminus: Serine--tRNA ligase (426 aa).

233 to 235 (TSE) is an L-serine binding site. 264 to 266 (RAE) contacts ATP. Glu287 contacts L-serine. Position 351-354 (351-354 (EISS)) interacts with ATP. An L-serine-binding site is contributed by Ser387.

It belongs to the class-II aminoacyl-tRNA synthetase family. Type-1 seryl-tRNA synthetase subfamily. As to quaternary structure, homodimer. The tRNA molecule binds across the dimer.

It is found in the cytoplasm. It catalyses the reaction tRNA(Ser) + L-serine + ATP = L-seryl-tRNA(Ser) + AMP + diphosphate + H(+). It carries out the reaction tRNA(Sec) + L-serine + ATP = L-seryl-tRNA(Sec) + AMP + diphosphate + H(+). The protein operates within aminoacyl-tRNA biosynthesis; selenocysteinyl-tRNA(Sec) biosynthesis; L-seryl-tRNA(Sec) from L-serine and tRNA(Sec): step 1/1. Catalyzes the attachment of serine to tRNA(Ser). Is also able to aminoacylate tRNA(Sec) with serine, to form the misacylated tRNA L-seryl-tRNA(Sec), which will be further converted into selenocysteinyl-tRNA(Sec). The sequence is that of Serine--tRNA ligase from Stenotrophomonas maltophilia (strain R551-3).